We begin with the raw amino-acid sequence, 360 residues long: Archaemetzincin-2 (360 aa).

His-254 contacts Zn(2+). The active-site Proton acceptor is the Glu-255. Residues His-258, His-264, Cys-265, Cys-270, Cys-289, and Cys-292 each contribute to the Zn(2+) site.

It belongs to the peptidase M54 family. It depends on Zn(2+) as a cofactor.

Probable zinc metalloprotease. In Pongo abelii (Sumatran orangutan), this protein is Archaemetzincin-2 (AMZ2).